Reading from the N-terminus, the 506-residue chain is Mitogen-activated protein kinase 13 (506 aa).

The 292-residue stretch at 13–304 folds into the Protein kinase domain; that stretch reads YQIQEVVGKG…AEEALADPYF (292 aa). ATP-binding positions include 19 to 27 and lysine 42; that span reads VGKGSYGVV. The Proton acceptor role is filled by aspartate 139. Threonine 175 carries the post-translational modification Phosphothreonine. The TXY motif lies at 175–177; it reads TDY. Tyrosine 177 carries the phosphotyrosine modification. Positions 384–421 are disordered; that stretch reads YSRGERSTPLRRQHASLPRERVCSSVDSNNQDSDNEER.

It belongs to the protein kinase superfamily. CMGC Ser/Thr protein kinase family. MAP kinase subfamily. In terms of processing, dually phosphorylated on Thr-175 and Tyr-177, which activates the enzyme.

It catalyses the reaction L-seryl-[protein] + ATP = O-phospho-L-seryl-[protein] + ADP + H(+). The enzyme catalyses L-threonyl-[protein] + ATP = O-phospho-L-threonyl-[protein] + ADP + H(+). Activated by threonine and tyrosine phosphorylation. This Oryza sativa subsp. indica (Rice) protein is Mitogen-activated protein kinase 13 (MPK13).